A 249-amino-acid polypeptide reads, in one-letter code: NADH-quinone oxidoreductase subunit C (249 aa).

This sequence belongs to the complex I 30 kDa subunit family. As to quaternary structure, NDH-1 is composed of 14 different subunits. Subunits NuoB, C, D, E, F, and G constitute the peripheral sector of the complex.

Its subcellular location is the cell inner membrane. It catalyses the reaction a quinone + NADH + 5 H(+)(in) = a quinol + NAD(+) + 4 H(+)(out). Its function is as follows. NDH-1 shuttles electrons from NADH, via FMN and iron-sulfur (Fe-S) centers, to quinones in the respiratory chain. The immediate electron acceptor for the enzyme in this species is believed to be ubiquinone. Couples the redox reaction to proton translocation (for every two electrons transferred, four hydrogen ions are translocated across the cytoplasmic membrane), and thus conserves the redox energy in a proton gradient. This Xylella fastidiosa (strain M12) protein is NADH-quinone oxidoreductase subunit C.